We begin with the raw amino-acid sequence, 777 residues long: Rho-GTPase-activating protein 8 (777 aa).

Residues serine 3–aspartate 420 form the F-BAR domain. Residues glutamine 117–isoleucine 172 are a coiled coil. The region spanning valine 213 to glycine 296 is the DEP domain. Positions valine 454–phenylalanine 650 constitute a Rho-GAP domain. Residues leucine 667–serine 709 form a disordered region. Residues tyrosine 668 to serine 692 are compositionally biased toward polar residues. A phosphoserine mark is found at serine 676 and serine 680. Threonine 682 carries the post-translational modification Phosphothreonine. The residue at position 686 (serine 686) is a Phosphoserine. The residue at position 694 (threonine 694) is a Phosphothreonine. Serine 698 is subject to Phosphoserine.

Interacts with pak1/shk1. In terms of processing, phosphorylated by pak1/shk1.

The protein localises to the cytoplasm. In terms of biological role, acts in signal transduction. Negatively regulates the pak1/shk1 control pathway. This is Rho-GTPase-activating protein 8 (rga8) from Schizosaccharomyces pombe (strain 972 / ATCC 24843) (Fission yeast).